Consider the following 372-residue polypeptide: N-methyl-L-tryptophan oxidase (372 aa).

4–34 is a binding site for FAD; it reads DLIIIGSGSVGAAAGYYATRAGLKVLMTDAH. Position 307 is an S-8alpha-FAD cysteine (cysteine 307).

It belongs to the MSOX/MTOX family. MTOX subfamily. Monomer. Requires FAD as cofactor.

The enzyme catalyses N(alpha)-methyl-L-tryptophan + O2 + H2O = L-tryptophan + formaldehyde + H2O2. Its function is as follows. Catalyzes the oxidative demethylation of N-methyl-L-tryptophan. The protein is N-methyl-L-tryptophan oxidase of Citrobacter koseri (strain ATCC BAA-895 / CDC 4225-83 / SGSC4696).